The sequence spans 247 residues: Large ribosomal subunit protein uL3 (247 aa).

Disordered regions lie at residues 140-164 (SHRSIGSTGGRQDPGKTFKNKKMPG) and 212-247 (LPKEAPKPGKFKVVGDAQAVDEDKAPADTPAEKEGA). Gln151 carries the post-translational modification N5-methylglutamine. Positions 232–247 (DEDKAPADTPAEKEGA) are enriched in basic and acidic residues.

It belongs to the universal ribosomal protein uL3 family. Part of the 50S ribosomal subunit. Forms a cluster with proteins L14 and L19. In terms of processing, methylated by PrmB.

One of the primary rRNA binding proteins, it binds directly near the 3'-end of the 23S rRNA, where it nucleates assembly of the 50S subunit. This Nitrobacter winogradskyi (strain ATCC 25391 / DSM 10237 / CIP 104748 / NCIMB 11846 / Nb-255) protein is Large ribosomal subunit protein uL3.